The following is a 268-amino-acid chain: ELL-associated factor 1 (268 aa).

Residues 106-268 (IQVKKTRAEG…LSESGSDSDD (163 aa)) are disordered. Pro residues predominate over residues 128–154 (ARPPQPSQPPPPPPPMPFRAPTKPPAG). S165 is modified (phosphoserine). Positions 171 to 181 (DDIKRELRAEV) are enriched in basic and acidic residues. The interval 182–262 (DIIEQMSSSS…LRNDLQLSES (81 aa)) is necessary for transactivation activity. Low complexity predominate over residues 188–203 (SSSSGSSSSDSESSSG). The span at 238–268 (NGTSRPQGSSQLMNTLRNDLQLSESGSDSDD) shows a compositional bias: polar residues.

The protein belongs to the EAF family. Component of the super elongation complex (SEC), at least composed of EAF1, EAF2, CDK9, MLLT3/AF9, AFF (AFF1 or AFF4), the P-TEFb complex and ELL (ELL, ELL2 or ELL3). Interacts with ELL and ELL2.

Its subcellular location is the nucleus speckle. It is found in the nucleus. It localises to the cajal body. Acts as a transcriptional transactivator of ELL and ELL2 elongation activities. The chain is ELL-associated factor 1 (Eaf1) from Mus musculus (Mouse).